A 210-amino-acid polypeptide reads, in one-letter code: Large ribosomal subunit protein uL4 (210 aa).

As to quaternary structure, part of the 50S ribosomal subunit. The N-terminus is blocked.

In terms of biological role, one of the primary rRNA binding proteins, this protein initially binds near the 5'-end of the 23S rRNA. It is important during the early stages of 50S assembly. It makes multiple contacts with different domains of the 23S rRNA in the assembled 50S subunit and ribosome. Its function is as follows. Forms part of the polypeptide exit tunnel. This protein can be incorporated into E.coli ribosomes in vivo, which resulted in decreased peptidyltransferase (Ptase) activity of the hybrid ribosomes. The hybrid 50S subunits associate less well with 30S subunits to form the ribosome. The sequence is that of Large ribosomal subunit protein uL4 (rplD) from Thermus thermophilus (strain ATCC 27634 / DSM 579 / HB8).